The following is a 124-amino-acid chain: Orexigenic neuropeptide QRFP (124 aa).

The signal sequence occupies residues 1–17; that stretch reads MRGFRPLLSLLLPLSAC. The propeptide occupies 18–79; sequence FPLLDRRGPT…REHTGFRLGR (62 aa). Residues 63-101 form a disordered region; sequence REQQASHREHTGFRLGRQDGSSEAAGFLPADSEKASGPL. Residue Phe122 is modified to Phenylalanine amide.

It belongs to the RFamide neuropeptide family. As to quaternary structure, ligand for the G-protein coupled receptor QRFPR/GPR103. In terms of tissue distribution, expressed in the brain with highest levels in the periventricular hypothalamic nucleus and lateral hypothalamic areas. Expressed at moderate levels in the adrenal gland, eye, heart, intestine, liver, lung, kidney, mesenteric lymph node, ovary, placenta, Peyer patches, skin, spleen, stomach, testis, thymus and uterus.

The protein localises to the secreted. Functionally, stimulates feeding and grooming behavior, metabolic rate and locomotor activity and increases blood pressure. May have orexigenic activity. May promote aldosterone secretion by the adrenal gland. The sequence is that of Orexigenic neuropeptide QRFP from Mus musculus (Mouse).